The primary structure comprises 442 residues: uncharacterized protein (442 aa).

The ABC transporter domain occupies 1–238 (MKAEGLSGGY…QSIKAVYDTD (238 aa)). 33-40 (GPNGSGKT) contacts ATP.

This sequence belongs to the ABC transporter superfamily. As to quaternary structure, the complex is composed of two ATP-binding proteins (YvrA), two transmembrane proteins (YvrB) and a solute-binding protein (YvrC).

Its function is as follows. Probably part of an ABC transporter complex. Probably responsible for energy coupling to the transport system. This is an uncharacterized protein from Bacillus subtilis (strain 168).